A 248-amino-acid chain; its full sequence is uncharacterized protein (248 aa).

Residue 8–32 coordinates NADP(+); the sequence is EVALVTGASSGIGKAIALELASAGL. S134 serves as a coordination point for substrate. Residue Y147 is the Proton acceptor of the active site.

This sequence belongs to the short-chain dehydrogenases/reductases (SDR) family.

This is an uncharacterized protein from Sinorhizobium fredii (strain NBRC 101917 / NGR234).